The following is a 498-amino-acid chain: ATP synthase subunit beta, chloroplastic (498 aa).

Thr6 carries the post-translational modification Phosphothreonine. The residue at position 13 (Ser13) is a Phosphoserine. ATP is bound at residue 172–179; that stretch reads GGAGVGKT.

Belongs to the ATPase alpha/beta chains family. As to quaternary structure, F-type ATPases have 2 components, CF(1) - the catalytic core - and CF(0) - the membrane proton channel. CF(1) has five subunits: alpha(3), beta(3), gamma(1), delta(1), epsilon(1). CF(0) has four main subunits: a(1), b(1), b'(1) and c(9-12).

The protein resides in the plastid. The protein localises to the chloroplast thylakoid membrane. It carries out the reaction ATP + H2O + 4 H(+)(in) = ADP + phosphate + 5 H(+)(out). Functionally, produces ATP from ADP in the presence of a proton gradient across the membrane. The catalytic sites are hosted primarily by the beta subunits. In Arabis hirsuta (Hairy rock-cress), this protein is ATP synthase subunit beta, chloroplastic.